Reading from the N-terminus, the 359-residue chain is Phosphoserine aminotransferase (359 aa).

Arginine 41 contacts L-glutamate. Residues tryptophan 101, threonine 151, aspartate 170, and glutamine 193 each contribute to the pyridoxal 5'-phosphate site. Lysine 194 carries the N6-(pyridoxal phosphate)lysine modification. 235 to 236 (NT) lines the pyridoxal 5'-phosphate pocket.

Belongs to the class-V pyridoxal-phosphate-dependent aminotransferase family. SerC subfamily. As to quaternary structure, homodimer. Pyridoxal 5'-phosphate serves as cofactor.

It is found in the cytoplasm. The enzyme catalyses O-phospho-L-serine + 2-oxoglutarate = 3-phosphooxypyruvate + L-glutamate. The catalysed reaction is 4-(phosphooxy)-L-threonine + 2-oxoglutarate = (R)-3-hydroxy-2-oxo-4-phosphooxybutanoate + L-glutamate. It participates in amino-acid biosynthesis; L-serine biosynthesis; L-serine from 3-phospho-D-glycerate: step 2/3. Its pathway is cofactor biosynthesis; pyridoxine 5'-phosphate biosynthesis; pyridoxine 5'-phosphate from D-erythrose 4-phosphate: step 3/5. Catalyzes the reversible conversion of 3-phosphohydroxypyruvate to phosphoserine and of 3-hydroxy-2-oxo-4-phosphonooxybutanoate to phosphohydroxythreonine. The protein is Phosphoserine aminotransferase of Laribacter hongkongensis (strain HLHK9).